We begin with the raw amino-acid sequence, 160 residues long: Ribosome maturation factor RimP (160 aa).

The protein belongs to the RimP family.

It is found in the cytoplasm. In terms of biological role, required for maturation of 30S ribosomal subunits. The sequence is that of Ribosome maturation factor RimP from Symbiobacterium thermophilum (strain DSM 24528 / JCM 14929 / IAM 14863 / T).